Reading from the N-terminus, the 92-residue chain is Small ribosomal subunit protein uS19c (92 aa).

Belongs to the universal ribosomal protein uS19 family.

Its subcellular location is the plastid. It localises to the chloroplast. Functionally, protein S19 forms a complex with S13 that binds strongly to the 16S ribosomal RNA. In Platanus occidentalis (Sycamore), this protein is Small ribosomal subunit protein uS19c.